The primary structure comprises 512 residues: Cytochrome P450 monooxygenase gliC (512 aa).

A signal peptide spans 1-19 (MAFTLTILVPCMVLALVAA). 3 N-linked (GlcNAc...) asparagine glycosylation sites follow: Asn-118, Asn-421, and Asn-434. Cys-452 is a heme binding site.

It belongs to the cytochrome P450 family. It depends on heme as a cofactor.

It functions in the pathway mycotoxin biosynthesis. In terms of biological role, cytochrome P450 monooxygenase; part of the gene cluster that mediates the biosynthesis of gliotoxin, a member of the epipolythiodioxopiperazine (ETP) class of toxins characterized by a disulfide bridged cyclic dipeptide. The first step in gliotoxin biosynthesis is the condensation of serine and phenylalanine to form the cyclo-L-phenylalanyl-L-serine diketopiperazine (DKP) by the NRPS gliP. GliP is also able to produce the DKP cyclo-L-tryptophanyl-L-serine, suggesting that the substrate specificity of the first adenylation (A) domain in gliP is sufficiently relaxed to accommodate both L-Phe and L-Trp. The cytochrome P450 monooxygenase gliC has been shown to catalyze the subsequent hydroxylation of the alpha-carbon of L-Phe in cyclo-L-phenylalanyl-L-serine whereas the second cytochrome P450 enzyme, gliF, is presumably involved in the modification of the DKP side chain. The glutathione S-transferase (GST) gliG then forms a bis-glutathionylated biosynthetic intermediate which is responsible for the sulfurization of gliotoxin. This bis-glutathionylated intermediate is subsequently processed by the gamma-glutamyl cyclotransferase gliK to remove both gamma-glutamyl moieties. Subsequent processing via gliI yields a biosynthetic intermediate, which is N-methylated via the N-methyltransferase gliN, before the gliotoxin oxidoreductase gliT-mediated disulfide bridge closure. GliN-mediated amide methylation confers stability to ETP, damping the spontaneous formation of tri- and tetrasulfides. Intracellular dithiol gliotoxin oxidized by gliT is subsequently effluxed by gliA. Gliotoxin contributes to pathogenesis during invasive aspergillosis. In macrophages and neutrophils, gliotoxin showed inhibition of various different cell functions including cytokine production, antigen presentation, phagocytosis, and production of reactive oxygen species. This chain is Cytochrome P450 monooxygenase gliC, found in Aspergillus fumigatus (strain ATCC MYA-4609 / CBS 101355 / FGSC A1100 / Af293) (Neosartorya fumigata).